The primary structure comprises 344 residues: uncharacterized protein (344 aa).

Belongs to the glycosyltransferase 2 family.

Functionally, may be involved in the production of the exopolysaccharide (EPS) component of the extracellular matrix during biofilm formation. EPS is responsible for the adhesion of chains of cells into bundles. This is an uncharacterized protein from Bacillus subtilis (strain 168).